Consider the following 109-residue polypeptide: Immunity protein CdiI (109 aa).

Specifically interacts with cognate toxin CdiA, which inhibits the toxin.

Functionally, immunity protein component of a toxin-immunity protein module, which functions as a cellular contact-dependent growth inhibition (CDI) system. CDI modules allow bacteria to communicate with and inhibit the growth of closely related neighboring bacteria in a contact-dependent fashion. Neutralizes the toxic activity of cognate toxin CdiA (C-terminal 160 residue CT fragment) upon expression in E.coli. Does not inhibit toxic activity of CdiA from other strains of B.pseudomallei. In Burkholderia pseudomallei (Pseudomonas pseudomallei), this protein is Immunity protein CdiI (cdiI).